The chain runs to 450 residues: MAFKLWERFSQADNVFQALRPLTFISLLGLAPFRLNLNPRKEVQTSKFSFFAGIVHFLFFVLCFGISVKEGDSIIGYFFQTNITRFSDGTLRLTGILAMSTIFGFAMFKRQRLVSIIQNNIVVDEIFVRLGMKLDYRRILLSSFLISLGMLLFNVIYLCVSYSLLVSATISPSFVTFTTFALPHINISLMVFKFLCTTDLARSRFSMLNEILQDILDAHIEQLSALELSPMHSVVNHRRYSHRLRNLISTPMKRYSVTSVIRLNPEYAIKQVSNIHNLLCDICQTIEEYFTYPLLGIIAISFLFILFDDFYILEAILNPKRLDVFEADEFFAFFLMQLIWYIVIIVLIVEGSSRTILHSSYTAAIVHKILNITDDPELRDRLFRLSLQLSHRKVLFTAAGLFRLDRTLIFTITGAATCYLIILIQFRFTHHMDDTSSNSTNNLHSIHLGD.

Topologically, residues 1–47 (MAFKLWERFSQADNVFQALRPLTFISLLGLAPFRLNLNPRKEVQTSK) are cytoplasmic. A helical transmembrane segment spans residues 48 to 68 (FSFFAGIVHFLFFVLCFGISV). At 69 to 87 (KEGDSIIGYFFQTNITRFS) the chain is on the extracellular side. Asn82 carries an N-linked (GlcNAc...) asparagine glycan. The chain crosses the membrane as a helical span at residues 88-108 (DGTLRLTGILAMSTIFGFAMF). Residues 109-138 (KRQRLVSIIQNNIVVDEIFVRLGMKLDYRR) lie on the Cytoplasmic side of the membrane. The helical transmembrane segment at 139-159 (ILLSSFLISLGMLLFNVIYLC) threads the bilayer. At 160–171 (VSYSLLVSATIS) the chain is on the extracellular side. Residues 172-192 (PSFVTFTTFALPHINISLMVF) form a helical membrane-spanning segment. Topologically, residues 193 to 292 (KFLCTTDLAR…CQTIEEYFTY (100 aa)) are cytoplasmic. A helical transmembrane segment spans residues 293–313 (PLLGIIAISFLFILFDDFYIL). The Extracellular segment spans residues 314-329 (EAILNPKRLDVFEADE). Residues 330–350 (FFAFFLMQLIWYIVIIVLIVE) traverse the membrane as a helical segment. The Cytoplasmic segment spans residues 351 to 407 (GSSRTILHSSYTAAIVHKILNITDDPELRDRLFRLSLQLSHRKVLFTAAGLFRLDRT). A helical transmembrane segment spans residues 408–424 (LIFTITGAATCYLIILI). Topologically, residues 425–450 (QFRFTHHMDDTSSNSTNNLHSIHLGD) are extracellular. N-linked (GlcNAc...) asparagine glycosylation occurs at Asn438.

Belongs to the insect chemoreceptor superfamily. Gustatory receptor (GR) family. Gr2a subfamily. In terms of tissue distribution, in addition to expression in a large number of taste neurons, Gr28a is also expressed in a few nonchemosensory neurons, including the campaniform sensilla of the wing, leg stretch receptors, and multiple dendritic (MD) neurons in the abdomen. In larvea, is expressed in neurons of the terminal external chemosensory organ, the dorsal external chemosensory organ, as well as in the ventral and posterior pharyngeal sense organ.

The protein localises to the cell membrane. Probable gustatory receptor which mediates acceptance or avoidance behavior, depending on its substrates. Atypical expression also suggests nongustatory roles in the nervous system and tissues involved in proprioception, hygroreception, and other sensory modalities. It is also possible that it has chemosensory roles in the detection of internal ligands. The polypeptide is Putative gustatory receptor 28a (Gr28a) (Drosophila melanogaster (Fruit fly)).